The sequence spans 889 residues: MKNPFAHLAEPLDAAQPGKRFFNLNKLEDSRYGRLPFSIRVLLEAAVRNCDEFLVKKNDIENILNWNVMQHKNIEVPFKPARVILQDFTGVPAVVDFAAMRDAVKKLGGNPEKINPVCPADLVIDHSIQVDFNRRADSLQKNQDLEFERNKERFEFLKWGSQAFCNMRIIPPGSGIIHQVNLEYLARVVFDQDGCYYPDSLVGTDSHTTMIDGLGVLGWGVGGIEAEAVMLGQPISMVLPQVIGYKLMGKPHPLVTSTDIVLTITKHLRQVGVVGKFVEFFGPGVAQLSIADRATIANMCPEYGATAAFFPVDEVSIAYLLQTGREEDKVKHIQKYLQAVGMFRDFNDTSQDPDFTQVVELDLKTVVPCCSGPKRPQDKVAVSEMKKDFESCLGAKQGFKGFQVAPDRHNDRKTFLYSNSEFTLAHGSVVIAAITSCTNTSNPSVMLGAGLLAKKAVEAGLSVKPYIKTSLSPGSGVVTYYLRESGVMPYLSQLGFDVVGYGCMTCIGNSGPLPEPVVEAITQGDLVAVGVLSGNRNFEGRVHPNTRANYLASPPLVIAYAIAGTVRIDFEKEPLGVNAQGRQVFLKDIWPTRDEIQAVERQHVIPGMFKEVYQKIETVNKSWNALAAPSEKLYAWNPKSTYIKSPPFFESLTLDLQPPKSIVDAYVLLNLGDSVTTDHISPAGNIARNSPAARYLTNRGLTPREFNSYGSRRGNDAIMARGTFANIRLLNKFLNKQAPQTVHLPSGETLDVFDAAERYQQAGLPLIVLAGKEYGSGSSRDWAAKGPFLLGIKAVLAESYERIHRSNLVGMGVIPLEYLPGETADSLGLTGRERYTINIPEDLKPRMTVQIKLDTGKTFQAVMRFDTDVELTYFHNGGILNYMIRKMAQ.

Substrate contacts are provided by residues glutamine 86 and 205 to 207 (DSH). [4Fe-4S] cluster-binding residues include cysteine 437, cysteine 503, and cysteine 506. Substrate-binding positions include arginine 536, arginine 541, arginine 699, and 779-780 (SR).

The protein belongs to the aconitase/IPM isomerase family. As to quaternary structure, interacts (when associated with the 4Fe-4S) with FBXL5. Interacts with frataxin(81-210). The cofactor is [4Fe-4S] cluster.

It localises to the cytoplasm. Its subcellular location is the cytosol. The catalysed reaction is citrate = D-threo-isocitrate. Bifunctional iron sensor that switches between 2 activities depending on iron availability. Iron deprivation, promotes its mRNA binding activity through which it regulates the expression of genes involved in iron uptake, sequestration and utilization. Binds to iron-responsive elements (IRES) in the untranslated region of target mRNAs preventing for instance the translation of ferritin and aminolevulinic acid synthase and stabilizing the transferrin receptor mRNA. In terms of biological role, conversely, when cellular iron levels are high, binds a 4Fe-4S cluster which precludes RNA binding activity and promotes the aconitase activity, the isomerization of citrate to isocitrate via cis-aconitate. This chain is Cytoplasmic aconitate hydratase (Aco1), found in Mus musculus (Mouse).